The following is a 689-amino-acid chain: Glycine--tRNA ligase beta subunit (689 aa).

It belongs to the class-II aminoacyl-tRNA synthetase family. In terms of assembly, tetramer of two alpha and two beta subunits.

The protein resides in the cytoplasm. It carries out the reaction tRNA(Gly) + glycine + ATP = glycyl-tRNA(Gly) + AMP + diphosphate. The polypeptide is Glycine--tRNA ligase beta subunit (Shewanella baltica (strain OS155 / ATCC BAA-1091)).